The following is a 263-amino-acid chain: NADH dehydrogenase [ubiquinone] iron-sulfur protein 3, mitochondrial (263 aa).

Residues 1–35 (MVAAVARLWWRGLLGASALTRGAGRPSVLLLPVRR) constitute a mitochondrion transit peptide.

It belongs to the complex I 30 kDa subunit family. Core subunit of respiratory chain NADH dehydrogenase (Complex I) which is composed of 45 different subunits. Interacts with NDUFAF3. Interacts with RAB5IF. Found in subcomplexes containing subunits NDUFS2, MT-ND1 and NDUFA13.

The protein localises to the mitochondrion inner membrane. It catalyses the reaction a ubiquinone + NADH + 5 H(+)(in) = a ubiquinol + NAD(+) + 4 H(+)(out). Core subunit of the mitochondrial membrane respiratory chain NADH dehydrogenase (Complex I) which catalyzes electron transfer from NADH through the respiratory chain, using ubiquinone as an electron acceptor. Essential for the catalytic activity and assembly of complex I. The polypeptide is NADH dehydrogenase [ubiquinone] iron-sulfur protein 3, mitochondrial (NDUFS3) (Gorilla gorilla gorilla (Western lowland gorilla)).